The following is a 617-amino-acid chain: Secretogranin-2 (617 aa).

The signal sequence occupies residues 1–30 (MAGAKAYRLGAVLLLIHLIFLISGAEAASF). The residue at position 153 (Y153) is a Sulfotyrosine. S176 and S270 each carry phosphoserine. 2 stretches are compositionally biased toward basic and acidic residues: residues 261-286 (TQTQ…EMKR) and 295-307 (EENR…QLSE). The disordered stretch occupies residues 261–307 (TQTQEEVRDSKENTEKNEQINEEMKRSGQLGLPDEENRRESKDQLSE). A phosphoserine mark is found at S434, S532, S555, and S556.

The protein belongs to the chromogranin/secretogranin protein family. In terms of assembly, interacts with Secretogranin III/SCG3.

Its subcellular location is the secreted. Its function is as follows. Neuroendocrine protein of the granin family that regulates the biogenesis of secretory granules. The polypeptide is Secretogranin-2 (Scg2) (Mus musculus (Mouse)).